The chain runs to 230 residues: MFPLVPLRSPPATEEQLLHQAQRVAGHTLGELAALAGLPIPQDLKRDKGWIGVLLELWLGASAGSKPEQDFAAMGVELKTIPVDSQGKPLETTFVCVAPLTGNTGVTWETSHVRHKLKRVLWIPIEGDRAIPLAERRVGAPLLWSPDEKEDRQLCQDWEELMDMIVLGHVERITARHGEVMQLRPKAANSKALTEAIGARGEPILTLPRGFYLKKNFTGALLARHFLLKT.

The protein belongs to the MutH family.

The protein resides in the cytoplasm. Functionally, sequence-specific endonuclease that cleaves unmethylated GATC sequences. It is involved in DNA mismatch repair. The sequence is that of DNA mismatch repair protein MutH from Enterobacter sp. (strain 638).